Reading from the N-terminus, the 115-residue chain is Meromycolate extension acyl carrier protein (115 aa).

Positions 3 to 81 constitute a Carrier domain; sequence VTQEEIIAGI…DVVAYIQKLE (79 aa). Ser-41 bears the O-(pantetheine 4'-phosphoryl)serine mark.

This sequence belongs to the acyl carrier protein (ACP) family. 4'-phosphopantetheine is transferred from CoA to a specific serine of apo-AcpM.

It is found in the cytoplasm. In terms of biological role, acyl carrier protein involved in meromycolate extension. This chain is Meromycolate extension acyl carrier protein (acpM), found in Mycobacterium bovis (strain ATCC BAA-935 / AF2122/97).